The sequence spans 729 residues: Fatty acid oxidation complex subunit alpha (729 aa).

The interval Met1–Lys189 is enoyl-CoA hydratase/isomerase. Asp296 is a binding site for substrate. The segment at Glu311–Ala729 is 3-hydroxyacyl-CoA dehydrogenase. Residues Met324, Asp343, Val400–Glu402, Lys407, and Ser429 each bind NAD(+). The active-site For 3-hydroxyacyl-CoA dehydrogenase activity is the His450. An NAD(+)-binding site is contributed by Asn453. Substrate is bound by residues Asn500 and Tyr660. Residues Arg708–Ala729 form a disordered region.

The protein in the N-terminal section; belongs to the enoyl-CoA hydratase/isomerase family. It in the C-terminal section; belongs to the 3-hydroxyacyl-CoA dehydrogenase family. Heterotetramer of two alpha chains (FadB) and two beta chains (FadA).

It catalyses the reaction a (3S)-3-hydroxyacyl-CoA + NAD(+) = a 3-oxoacyl-CoA + NADH + H(+). The enzyme catalyses a (3S)-3-hydroxyacyl-CoA = a (2E)-enoyl-CoA + H2O. The catalysed reaction is a 4-saturated-(3S)-3-hydroxyacyl-CoA = a (3E)-enoyl-CoA + H2O. It carries out the reaction (3S)-3-hydroxybutanoyl-CoA = (3R)-3-hydroxybutanoyl-CoA. It catalyses the reaction a (3Z)-enoyl-CoA = a 4-saturated (2E)-enoyl-CoA. The enzyme catalyses a (3E)-enoyl-CoA = a 4-saturated (2E)-enoyl-CoA. The protein operates within lipid metabolism; fatty acid beta-oxidation. In terms of biological role, involved in the aerobic and anaerobic degradation of long-chain fatty acids via beta-oxidation cycle. Catalyzes the formation of 3-oxoacyl-CoA from enoyl-CoA via L-3-hydroxyacyl-CoA. It can also use D-3-hydroxyacyl-CoA and cis-3-enoyl-CoA as substrate. The protein is Fatty acid oxidation complex subunit alpha of Salmonella agona (strain SL483).